Here is a 466-residue protein sequence, read N- to C-terminus: UDP-N-acetylmuramoylalanine--D-glutamate ligase (466 aa).

117–123 is an ATP binding site; that stretch reads GTKGKTT.

Belongs to the MurCDEF family.

Its subcellular location is the cytoplasm. It carries out the reaction UDP-N-acetyl-alpha-D-muramoyl-L-alanine + D-glutamate + ATP = UDP-N-acetyl-alpha-D-muramoyl-L-alanyl-D-glutamate + ADP + phosphate + H(+). Its pathway is cell wall biogenesis; peptidoglycan biosynthesis. In terms of biological role, cell wall formation. Catalyzes the addition of glutamate to the nucleotide precursor UDP-N-acetylmuramoyl-L-alanine (UMA). In Roseiflexus sp. (strain RS-1), this protein is UDP-N-acetylmuramoylalanine--D-glutamate ligase.